Here is a 129-residue protein sequence, read N- to C-terminus: Glycine cleavage system H protein (129 aa).

Residues 24-106 (TFTVGISEHA…YGDGWLFRIK (83 aa)) form the Lipoyl-binding domain. Lys65 is modified (N6-lipoyllysine).

The protein belongs to the GcvH family. In terms of assembly, the glycine cleavage system is composed of four proteins: P, T, L and H. The cofactor is (R)-lipoate.

Its function is as follows. The glycine cleavage system catalyzes the degradation of glycine. The H protein shuttles the methylamine group of glycine from the P protein to the T protein. The chain is Glycine cleavage system H protein from Pseudoalteromonas atlantica (strain T6c / ATCC BAA-1087).